A 2656-amino-acid polypeptide reads, in one-letter code: 1-phosphatidylinositol 3-phosphate 5-kinase (2656 aa).

Positions 24 to 159 (FGTDDSQKDF…NSTNNDTSSN (136 aa)) are disordered. Composition is skewed to low complexity over residues 59 to 107 (NNNN…NNNN) and 124 to 159 (SNTT…TSSN). The FYVE-type zinc-finger motif lies at 198 to 255 (DHSSAVCYECSEEFTTFKRRHHCRLCGQIFCWKCSQKTLTDGKGERVRVCNFCYRRYM). Residues C204, C207, C220, C223, C228, C231, C247, and C250 each coordinate Zn(2+). Residues 304-331 (NVSLGNSGDNSSFVQSPNNNFSQSPTFS) show a composition bias toward polar residues. Disordered stretches follow at residues 304 to 383 (NVSL…NNQQ), 465 to 495 (DHHQ…SPIV), 517 to 570 (DNLD…SSSS), 618 to 657 (NNND…NTSF), 670 to 823 (TIGR…QQQP), 1115 to 1150 (SNSI…NNST), 1633 to 1659 (RSKR…QILI), 1710 to 1844 (VNNN…SSTP), 2031 to 2127 (QQQQ…SISP), 2179 to 2208 (NQQQ…SIIE), 2246 to 2304 (QQGD…SSNS), and 2617 to 2656 (NNNN…QINK). Low complexity predominate over residues 332–355 (QQQQQQQQQQQQQQQQQQQQQQQQ). Composition is skewed to polar residues over residues 356 to 371 (TTGV…NSTL), 473 to 489 (SNSH…TPSG), and 542 to 557 (SHSS…TVST). Low complexity-rich tracts occupy residues 558 to 570 (GESN…SSSS), 618 to 637 (NNND…NNNN), 674 to 730 (NNNN…NLPN), 743 to 757 (QQQQ…QPQP), and 811 to 823 (PSSS…QQQP). 2 stretches are compositionally biased toward low complexity: residues 1639–1656 (QQQQ…PQPQ) and 1710–1746 (VNNN…NNNN). Coiled coils occupy residues 1741–1823 (NNNN…NNNN) and 2019–2061 (KRIS…QQEQ). The span at 1750–1798 (NKSENENENKNENKNENENENENKNENKNENENENKKENENQLEIKNEN) shows a compositional bias: basic and acidic residues. 4 stretches are compositionally biased toward low complexity: residues 1807–1833 (NNNN…IDNN), 2031–2061 (QQQQ…QQEQ), 2078–2107 (SPSS…SETN), and 2118–2127 (LSGSPISISP). The span at 2193 to 2202 (IDEKDDRNTE) shows a compositional bias: basic and acidic residues. Low complexity-rich tracts occupy residues 2252–2283 (NNNN…NNNN) and 2618–2647 (NNNN…GNIN). The 322-residue stretch at 2275–2596 (NNNNTNNNNE…RFRDAMWLYF (322 aa)) folds into the PIPK domain.

The protein localises to the endosome membrane. It is found in the early endosome membrane. It localises to the cytoplasmic vesicle. The protein resides in the phagosome membrane. Its subcellular location is the late endosome membrane. It catalyses the reaction a 1,2-diacyl-sn-glycero-3-phospho-(1D-myo-inositol-3-phosphate) + ATP = a 1,2-diacyl-sn-glycero-3-phospho-(1D-myo-inositol-3,5-bisphosphate) + ADP + H(+). It carries out the reaction a 1,2-diacyl-sn-glycero-3-phospho-(1D-myo-inositol) + ATP = a 1,2-diacyl-sn-glycero-3-phospho-(1D-myo-inositol-5-phosphate) + ADP + H(+). The catalysed reaction is L-seryl-[protein] + ATP = O-phospho-L-seryl-[protein] + ADP + H(+). Functionally, dual specificity kinase part of the PI(3,5)P2 regulatory complex which regulates both the synthesis and turnover of phosphatidylinositol 3,5-bisphosphate (PtdIns(3,5)P2). Catalyzes the phosphorylation of phosphatidylinositol 3-phosphate on the fifth hydroxyl of the myo-inositol ring, to form phosphatidylinositol 3,5-bisphosphate. The protein is 1-phosphatidylinositol 3-phosphate 5-kinase (pip5k3) of Dictyostelium discoideum (Social amoeba).